The following is a 432-amino-acid chain: Glutamyl-tRNA reductase (432 aa).

Residues 49–52 (TCNR), S109, 114–116 (EGQ), and Q120 contribute to the substrate site. The Nucleophile role is filled by C50. 198–203 (GAGRMS) serves as a coordination point for NADP(+).

It belongs to the glutamyl-tRNA reductase family. As to quaternary structure, homodimer.

The catalysed reaction is (S)-4-amino-5-oxopentanoate + tRNA(Glu) + NADP(+) = L-glutamyl-tRNA(Glu) + NADPH + H(+). The protein operates within porphyrin-containing compound metabolism; protoporphyrin-IX biosynthesis; 5-aminolevulinate from L-glutamyl-tRNA(Glu): step 1/2. Its pathway is porphyrin-containing compound metabolism; chlorophyll biosynthesis. In terms of biological role, catalyzes the NADPH-dependent reduction of glutamyl-tRNA(Glu) to glutamate 1-semialdehyde (GSA). This Synechococcus sp. (strain CC9605) protein is Glutamyl-tRNA reductase.